A 272-amino-acid polypeptide reads, in one-letter code: Prohibitin 1 (272 aa).

A2 is modified (N-acetylalanine). T91 carries the post-translational modification Phosphothreonine. 2 positions are modified to N6-acetyllysine: K128 and K186. Residues K177–I211 are a coiled coil. Position 202 is an N6-acetyllysine; alternate (K202). K202 bears the N6-succinyllysine; alternate mark. Y249 bears the Phosphotyrosine mark.

The protein belongs to the prohibitin family. As to quaternary structure, interacts with PHB2. Interacts with STOML2. Interacts with CD86 (via cytoplasmic domain); the interactions increases after priming with CD40. (Microbial infection) Interacts with human enterovirus 71/EV-71 capsid protein VP0, protein 3CD and protease 3C. In terms of tissue distribution, widely expressed in different tissues.

It localises to the mitochondrion inner membrane. The protein localises to the nucleus. It is found in the cell membrane. The protein resides in the cytoplasm. With respect to regulation, target of the anti-cancer drug Rocaglamide (Roc-A). Functionally, protein with pleiotropic attributes mediated in a cell-compartment- and tissue-specific manner, which include the plasma membrane-associated cell signaling functions, mitochondrial chaperone, and transcriptional co-regulator of transcription factors in the nucleus. Plays a role in adipose tissue and glucose homeostasis in a sex-specific manner. Contributes to pulmonary vascular remodeling by accelerating proliferation of pulmonary arterial smooth muscle cells. In the mitochondria, together with PHB2, forms large ring complexes (prohibitin complexes) in the inner mitochondrial membrane (IMM) and functions as a chaperone protein that stabilizes mitochondrial respiratory enzymes and maintains mitochondrial integrity in the IMM, which is required for mitochondrial morphogenesis, neuronal survival, and normal lifespan. The prohibitin complex, with DNAJC19, regulates cardiolipin remodeling and the protein turnover of OMA1 in a cardiolipin-binding manner. Regulates mitochondrial respiration activity playing a role in cellular aging. The prohibitin complex plays a role of mitophagy receptor involved in targeting mitochondria for autophagic degradation. Involved in mitochondrial-mediated antiviral innate immunity, activates RIG-I-mediated signal transduction and production of IFNB1 and pro-inflammatory cytokine IL6. Its function is as follows. In the nucleus, acts as a transcription coregulator, enhances promoter binding by TP53, a transcription factor it activates, but reduces the promoter binding by E2F1, a transcription factor it represses. Interacts with STAT3 to affect IL17 secretion in T-helper Th17 cells. In terms of biological role, in the plasma membrane, cooperates with CD86 to mediate CD86-signaling in B lymphocytes that regulates the level of IgG1 produced through the activation of distal signaling intermediates. Upon CD40 engagement, required to activate NF-kappa-B signaling pathway via phospholipase C and protein kinase C activation. Functionally, (Microbial infection) In neuronal cells, cell surface-expressed PHB1 is involved in human enterovirus 71/EV-71 entry into neuronal cells specifically, while membrane-bound mitochondrial PHB1 associates with the virus replication complex and facilitates viral replication. May serve as a receptor for EV71. The chain is Prohibitin 1 (Phb1) from Mus musculus (Mouse).